The following is a 324-amino-acid chain: MGSKMLFSLTSPRLFSAVSRKPSSSFSPSPPSPSSRTQWTQLSPGKSISLRRRVFLLPAKATTEQSGPVGGDNVDSNVLPYCSINKAEKKTIGEMEQEFLQALQSFYYDGKAIMSNEEFDNLKEELMWEGSSVVMLSSDEQRFLEASMAYVSGNPILNDEEYDKLKLKLKIDGSDIVSEGPRCSLRSKKVYSDLAVDYFKMLLLNVPATVVALGLFFFLDDITGFEITYIMELPEPYSFIFTWFAAVPVIVYLALSITKLIIKDFLILKGPCPNCGTENTSFFGTILSISSGGKTNTVKCTNCGTAMVYDSGSRLITLPEGSQA.

The transit peptide at 1–60 directs the protein to the chloroplast; that stretch reads MGSKMLFSLTSPRLFSAVSRKPSSSFSPSPPSPSSRTQWTQLSPGKSISLRRRVFLLPAK. Positions 16–42 are disordered; it reads SAVSRKPSSSFSPSPPSPSSRTQWTQL. At 61–198 the chain is on the stromal side; that stretch reads ATTEQSGPVG…KVYSDLAVDY (138 aa). Cysteine 82 and cysteine 183 are disulfide-bonded. A helical transmembrane segment spans residues 199 to 219; that stretch reads FKMLLLNVPATVVALGLFFFL. At 220 to 236 the chain is on the lumenal, thylakoid side; the sequence is DDITGFEITYIMELPEP. The helical transmembrane segment at 237–257 threads the bilayer; that stretch reads YSFIFTWFAAVPVIVYLALSI. The Stromal segment spans residues 258 to 324; sequence TKLIIKDFLI…LITLPEGSQA (67 aa).

It belongs to the PGR5 family. In terms of assembly, homodimer and heterodimer with PGR5. Interacts with PGR5, FD2, petC, psaD1, LFNR1 and LFNR2. Also interacts with a Fe-containing cofactor (FCC). Disulfide bonds; Cys-300 and Cys-303 are probably involved in the formation of disulfide bridges with 'Cys-11' and 'Cys-105' of PGR5 while Cys-272 and Cys-275 are probably involved in the binding of a Fe-containing cofactor (FCC).

It is found in the plastid. The protein resides in the chloroplast thylakoid membrane. With respect to regulation, inhibited by antimycin A. Ferredoxin-plastoquinone reductase involved in cyclic electron flow (CEF) around photosystem I. The homodimer is probably not involved in CEF. The protein is PGR5-like protein 1A, chloroplastic (PGRL1A) of Arabidopsis thaliana (Mouse-ear cress).